A 268-amino-acid chain; its full sequence is Formamidopyrimidine-DNA glycosylase (268 aa).

Proline 2 functions as the Schiff-base intermediate with DNA in the catalytic mechanism. Glutamate 3 functions as the Proton donor in the catalytic mechanism. Catalysis depends on lysine 56, which acts as the Proton donor; for beta-elimination activity. Histidine 91, arginine 110, and arginine 149 together coordinate DNA. Residues 234 to 268 (QVYGRFNQACPNCGQPLKRSRIGGRSSHYCEKCQQ) form an FPG-type zinc finger. Catalysis depends on arginine 258, which acts as the Proton donor; for delta-elimination activity.

It belongs to the FPG family. Monomer. Zn(2+) is required as a cofactor.

The catalysed reaction is Hydrolysis of DNA containing ring-opened 7-methylguanine residues, releasing 2,6-diamino-4-hydroxy-5-(N-methyl)formamidopyrimidine.. It carries out the reaction 2'-deoxyribonucleotide-(2'-deoxyribose 5'-phosphate)-2'-deoxyribonucleotide-DNA = a 3'-end 2'-deoxyribonucleotide-(2,3-dehydro-2,3-deoxyribose 5'-phosphate)-DNA + a 5'-end 5'-phospho-2'-deoxyribonucleoside-DNA + H(+). Involved in base excision repair of DNA damaged by oxidation or by mutagenic agents. Acts as a DNA glycosylase that recognizes and removes damaged bases. Has a preference for oxidized purines, such as 7,8-dihydro-8-oxoguanine (8-oxoG). Has AP (apurinic/apyrimidinic) lyase activity and introduces nicks in the DNA strand. Cleaves the DNA backbone by beta-delta elimination to generate a single-strand break at the site of the removed base with both 3'- and 5'-phosphates. The sequence is that of Formamidopyrimidine-DNA glycosylase from Syntrophomonas wolfei subsp. wolfei (strain DSM 2245B / Goettingen).